Reading from the N-terminus, the 523-residue chain is Apolipoprotein N-acyltransferase (523 aa).

7 helical membrane passes run 26–46 (LRFA…AFAP), 49–66 (WWWL…LVRQ), 74–94 (AWVG…WLYI), 109–129 (AAVL…AWLW), 137–157 (QLSG…SEWL), 185–205 (LVGV…LCAA), and 212–232 (WLAG…HTIA). Residues 246–487 (LQGNVPQDVK…LGTLQADVQG (242 aa)) form the CN hydrolase domain. Glu284 (proton acceptor) is an active-site residue. Residue Lys345 is part of the active site. The active-site Nucleophile is Cys395. A helical membrane pass occupies residues 494 to 514 (FVRTGNAPALGAGVLVLLAAL).

Belongs to the CN hydrolase family. Apolipoprotein N-acyltransferase subfamily.

It is found in the cell inner membrane. It catalyses the reaction N-terminal S-1,2-diacyl-sn-glyceryl-L-cysteinyl-[lipoprotein] + a glycerophospholipid = N-acyl-S-1,2-diacyl-sn-glyceryl-L-cysteinyl-[lipoprotein] + a 2-acyl-sn-glycero-3-phospholipid + H(+). Its pathway is protein modification; lipoprotein biosynthesis (N-acyl transfer). Catalyzes the phospholipid dependent N-acylation of the N-terminal cysteine of apolipoprotein, the last step in lipoprotein maturation. In Ralstonia nicotianae (strain ATCC BAA-1114 / GMI1000) (Ralstonia solanacearum), this protein is Apolipoprotein N-acyltransferase.